The chain runs to 296 residues: tRNA dimethylallyltransferase (296 aa).

Residue 2-9 (GPTASGKT) participates in ATP binding. Residue 4–9 (TASGKT) coordinates substrate. 3 interaction with substrate tRNA regions span residues 27-30 (DSAL), 151-155 (QRLSR), and 232-237 (RCVGYR).

Belongs to the IPP transferase family. Monomer. Mg(2+) is required as a cofactor.

It carries out the reaction adenosine(37) in tRNA + dimethylallyl diphosphate = N(6)-dimethylallyladenosine(37) in tRNA + diphosphate. In terms of biological role, catalyzes the transfer of a dimethylallyl group onto the adenine at position 37 in tRNAs that read codons beginning with uridine, leading to the formation of N6-(dimethylallyl)adenosine (i(6)A). This chain is tRNA dimethylallyltransferase, found in Shewanella baltica (strain OS155 / ATCC BAA-1091).